Reading from the N-terminus, the 195-residue chain is Imidazoleglycerol-phosphate dehydratase (195 aa).

It belongs to the imidazoleglycerol-phosphate dehydratase family.

The protein resides in the cytoplasm. The enzyme catalyses D-erythro-1-(imidazol-4-yl)glycerol 3-phosphate = 3-(imidazol-4-yl)-2-oxopropyl phosphate + H2O. It participates in amino-acid biosynthesis; L-histidine biosynthesis; L-histidine from 5-phospho-alpha-D-ribose 1-diphosphate: step 6/9. This chain is Imidazoleglycerol-phosphate dehydratase, found in Burkholderia lata (strain ATCC 17760 / DSM 23089 / LMG 22485 / NCIMB 9086 / R18194 / 383).